The following is a 375-amino-acid chain: Succinyl-diaminopimelate desuccinylase (375 aa).

Position 66 (H66) interacts with Zn(2+). Residue D68 is part of the active site. D99 serves as a coordination point for Zn(2+). Residue E133 is the Proton acceptor of the active site. The Zn(2+) site is built by E134, E162, and H348.

Belongs to the peptidase M20A family. DapE subfamily. As to quaternary structure, homodimer. Requires Zn(2+) as cofactor. Co(2+) is required as a cofactor.

It catalyses the reaction N-succinyl-(2S,6S)-2,6-diaminopimelate + H2O = (2S,6S)-2,6-diaminopimelate + succinate. It participates in amino-acid biosynthesis; L-lysine biosynthesis via DAP pathway; LL-2,6-diaminopimelate from (S)-tetrahydrodipicolinate (succinylase route): step 3/3. Functionally, catalyzes the hydrolysis of N-succinyl-L,L-diaminopimelic acid (SDAP), forming succinate and LL-2,6-diaminopimelate (DAP), an intermediate involved in the bacterial biosynthesis of lysine and meso-diaminopimelic acid, an essential component of bacterial cell walls. In Escherichia coli O139:H28 (strain E24377A / ETEC), this protein is Succinyl-diaminopimelate desuccinylase.